A 374-amino-acid chain; its full sequence is F(420)H(2) dehydrogenase subunit D (374 aa).

Belongs to the complex I 49 kDa subunit family. In terms of assembly, the FPO complex is composed of at least 13 different subunits.

It localises to the cell inner membrane. The enzyme catalyses methanophenazine + reduced coenzyme F420-(gamma-L-Glu)(n) = dihydromethanophenazine + oxidized coenzyme F420-(gamma-L-Glu)(n) + H(+). In terms of biological role, component of the F(420)H(2) dehydrogenase (FPO complex) which is part of the energy-conserving F(420)H(2):heterodisulfide oxidoreductase system. The membrane-bound electron transfer system of the complex plays an important role in the metabolism of methylotrophic methanogens when the organisms grow on methanol or methylamines. Catalyzes the oxidation of methanophenazine to dihydromethanophenazine. It shuttles electrons from F(420)H(2), via FAD and iron-sulfur (Fe-S) centers, to methanophenazine (an electron carrier in the membrane). It couples the redox reaction to proton translocation (for every two electrons transferred, two hydrogen ions are translocated across the cytoplasmic membrane), and thus conserves the redox energy in a proton gradient. It also catalyzes the oxidation of F(420)H(2) with quinones such as 2,3-dimethyl-1,4-naphthoquinone, 2-methyl-1,4-naphthoquinone and tetramethyl-p-benzoquinone. The protein is F(420)H(2) dehydrogenase subunit D (fpoD) of Methanosarcina mazei (strain ATCC BAA-159 / DSM 3647 / Goe1 / Go1 / JCM 11833 / OCM 88) (Methanosarcina frisia).